Reading from the N-terminus, the 584-residue chain is 2-succinyl-5-enolpyruvyl-6-hydroxy-3-cyclohexene-1-carboxylate synthase (584 aa).

It belongs to the TPP enzyme family. MenD subfamily. Homodimer. The cofactor is Mg(2+). Requires Mn(2+) as cofactor. It depends on thiamine diphosphate as a cofactor.

The catalysed reaction is isochorismate + 2-oxoglutarate + H(+) = 5-enolpyruvoyl-6-hydroxy-2-succinyl-cyclohex-3-ene-1-carboxylate + CO2. Its pathway is quinol/quinone metabolism; 1,4-dihydroxy-2-naphthoate biosynthesis; 1,4-dihydroxy-2-naphthoate from chorismate: step 2/7. The protein operates within quinol/quinone metabolism; menaquinone biosynthesis. Functionally, catalyzes the thiamine diphosphate-dependent decarboxylation of 2-oxoglutarate and the subsequent addition of the resulting succinic semialdehyde-thiamine pyrophosphate anion to isochorismate to yield 2-succinyl-5-enolpyruvyl-6-hydroxy-3-cyclohexene-1-carboxylate (SEPHCHC). This Bacillus anthracis protein is 2-succinyl-5-enolpyruvyl-6-hydroxy-3-cyclohexene-1-carboxylate synthase.